The chain runs to 590 residues: DNA primase (590 aa).

The segment at 37 to 61 adopts a CHC2-type zinc-finger fold; the sequence is CPFHKEKTPSFSVSPTKQFYHCFSC. One can recognise a Toprim domain in the interval 255 to 337; it reads GRILVVEGYM…DKSLHFLFLP (83 aa). Mg(2+)-binding residues include Glu-261, Asp-305, and Asp-307.

It belongs to the DnaG primase family. As to quaternary structure, monomer. Interacts with DnaB. Zn(2+) serves as cofactor. The cofactor is Mg(2+).

The catalysed reaction is ssDNA + n NTP = ssDNA/pppN(pN)n-1 hybrid + (n-1) diphosphate.. In terms of biological role, RNA polymerase that catalyzes the synthesis of short RNA molecules used as primers for DNA polymerase during DNA replication. The sequence is that of DNA primase from Neisseria meningitidis serogroup B (strain ATCC BAA-335 / MC58).